The sequence spans 307 residues: Acyl transferase (307 aa).

Residues Ser116, Asp213, and His243 each act as charge relay system in the active site.

It belongs to the LuxD family.

The protein operates within lipid metabolism; fatty acid reduction for biolumincescence. Its function is as follows. Acyl transferase is part of the fatty acid reductase system required for aldehyde biosynthesis; it produces fatty acids for the luminescent reaction. This chain is Acyl transferase, found in Aliivibrio fischeri (strain MJ11) (Vibrio fischeri).